The sequence spans 737 residues: tRNA-dihydrouridine(47) synthase [NAD(P)(+)] (737 aa).

Composition is skewed to basic and acidic residues over residues 1–11 (MESQETAKRPI) and 24–33 (PATKRVKLDD). Residues 1–127 (MESQETAKRP…GKKKRPKGQN (127 aa)) are disordered. Over residues 35 to 44 (PVPQIQEEPS) the composition is skewed to low complexity. A compositionally biased stretch (basic and acidic residues) spans 57 to 82 (EDEKPTEQRQDDRDKRRGIAPIKKEY). C3H1-type zinc fingers lie at residues 142-166 (CNSV…NALH) and 187-208 (CPVW…VESH). FMN-binding positions include 332 to 334 (PLT) and Gln407. The active-site Proton donor is Cys439. Residues Lys479, His520, 577–579 (NGD), and 601–602 (GR) each bind FMN.

Belongs to the Dus family. Dus3 subfamily. It depends on FMN as a cofactor.

It is found in the cytoplasm. The protein localises to the nucleus. It catalyses the reaction 5,6-dihydrouridine(47) in tRNA + NAD(+) = uridine(47) in tRNA + NADH + H(+). The enzyme catalyses 5,6-dihydrouridine(47) in tRNA + NADP(+) = uridine(47) in tRNA + NADPH + H(+). It carries out the reaction a 5,6-dihydrouridine in mRNA + NAD(+) = a uridine in mRNA + NADH + H(+). The catalysed reaction is a 5,6-dihydrouridine in mRNA + NADP(+) = a uridine in mRNA + NADPH + H(+). In terms of biological role, catalyzes the synthesis of dihydrouridine, a modified base found in the D-loop of most tRNAs. Specifically modifies U47 in cytoplasmic tRNAs. Catalyzes the synthesis of dihydrouridine in some mRNAs, thereby affecting their translation. The chain is tRNA-dihydrouridine(47) synthase [NAD(P)(+)] (dus-3) from Neurospora crassa (strain ATCC 24698 / 74-OR23-1A / CBS 708.71 / DSM 1257 / FGSC 987).